Here is a 593-residue protein sequence, read N- to C-terminus: Immunoglobulin G-binding protein G (593 aa).

Positions 1-33 (MEKEKKVKYFLRKSAFGLASVSAAFLVGSTVFA) are cleaved as a signal peptide. Tandem repeats lie at residues 104–140 (LAKA…VKDL), 179–215 (LAEA…VKDL), 254–290 (LAEA…VKAL), 303–357 (TYKL…TVTE), and 373–427 (TYKL…TVTE). The tract at residues 104 to 290 (LAKAKADALK…AKTVEGVKAL (187 aa)) is 3 X 37 AA repeats. The tract at residues 303–427 (TYKLILNGKT…DATKTFTVTE (125 aa)) is 2 X 55 AA repeats. The disordered stretch occupies residues 503–567 (PGDAPTEPEK…TLPTTGEGSN (65 aa)). The span at 529–557 (AKDDAKKDDTKKEDAKKPEAKKEDAKKAE) shows a compositional bias: basic and acidic residues. The tract at residues 531–555 (DDAKKDDTKKEDAKKPEAKKEDAKK) is 5 X 5 AA repeats of [DE]-D-A-K-K. The LPXTG sorting signal motif lies at 559 to 563 (LPTTG). Thr562 is modified (pentaglycyl murein peptidoglycan amidated threonine). Residues 563–593 (GEGSNPFFTAAALAVMAGAGALAVASKRKED) constitute a propeptide, removed by sortase.

Its subcellular location is the secreted. It is found in the cell wall. This chain is Immunoglobulin G-binding protein G (spg), found in Streptococcus sp. group G.